A 413-amino-acid chain; its full sequence is Probable aminotransferase sirI (413 aa).

Position 255 is an N6-(pyridoxal phosphate)lysine (Lys-255).

Belongs to the class-I pyridoxal-phosphate-dependent aminotransferase family. Requires pyridoxal 5'-phosphate as cofactor.

The protein operates within mycotoxin biosynthesis. Functionally, probable aminotransferase; part of the gene cluster that mediates the biosynthesis of sirodesmin PL, an epipolythiodioxopiperazine (ETP) characterized by a disulfide bridged cyclic dipeptide and that acts as a phytotoxin which is involved in the blackleg didease of canola. SirD catalyzes the O-prenylation of L-tyrosine (L-Tyr) in the presence of dimethylallyl diphosphate (DMAPP) to yield 4-O-dimethylallyl-L-Tyr, and therefore represents probably the first pathway-specific enzyme in the biosynthesis of sirodesmin PL. 4-O-dimethylallyl-L-Tyr, then undergoes condensation with L-Ser in a reaction catalyzed by the non-ribosomal peptide synthase sirP to form the diketopiperazine (DKP) backbone. Further bishydroxylation of the DKP performed by the cytochrome P450 monooxygenase sirC leads to the production of the intermediate phomamide. This step is essential to form the reactive thiol group required for toxicity of sirodesmin PL. The next steps of sirodesmin biosynthesis are not well understood yet, but some predictions could be made from intermediate compounds identification. Phomamide is converted into phomalizarine via oxidation, probably by sirT. Further oxidation, methylation (by sirM or sirN) and reduction steps convert phomalizarine to deacetyl sirodesmin. Finally, acetyltransferase sirH probably acetylates deacetyl sirodesmin to produce sirodesmin PL. The sequence is that of Probable aminotransferase sirI from Leptosphaeria maculans (Blackleg fungus).